A 935-amino-acid chain; its full sequence is DNA repair protein rev1 (935 aa).

The region spanning 59–147 (SKSDLFHGLA…KILPWINYRT (89 aa)) is the BRCT domain. A compositionally biased stretch (polar residues) spans 162–178 (SKPSQPEGNLEDIQTSS). Residues 162 to 193 (SKPSQPEGNLEDIQTSSQEEEHDNEKDKTKES) form a disordered region. The segment covering 184–193 (DNEKDKTKES) has biased composition (basic and acidic residues). An interaction with target DNA region spans residues 235–245 (FFSSSRLHHLS). DCTP is bound by residues Arg-240 and 283–287 (DFDCF). A UmuC domain is found at 279–460 (LLHVDFDCFF…LSVQDLPGVG (182 aa)). Mg(2+) contacts are provided by Asp-283 and Phe-284. An interaction with target DNA region spans residues 310–312 (IKN). Residues 317-323 (SCNYEAR), Asn-329, and Asp-378 contribute to the dCTP site. Mg(2+)-binding residues include Asp-378 and Glu-379. 2 interaction with target DNA regions span residues 460 to 463 (GSSQ) and 517 to 525 (RRSISVDVN).

This sequence belongs to the DNA polymerase type-Y family. Requires Mg(2+) as cofactor.

It is found in the nucleus. The protein localises to the nucleolus. It localises to the mitochondrion. Its subcellular location is the cytoplasm. The protein resides in the cytoskeleton. It is found in the spindle. Deoxycytidyl transferase involved in DNA repair. Transfers a dCMP residue from dCTP to the 3'-end of a DNA primer in a template-dependent reaction. May assist in the first step in the bypass of abasic lesions by the insertion of a nucleotide opposite the lesion. Required for normal induction of mutations by physical and chemical agents. Involved in mitochondrial DNA mutagenesis. The chain is DNA repair protein rev1 from Schizosaccharomyces pombe (strain 972 / ATCC 24843) (Fission yeast).